We begin with the raw amino-acid sequence, 1217 residues long: Nuclear matrix constituent protein 1 (1217 aa).

A compositionally biased stretch (polar residues) spans Met1–Lys14. Residues Met1–Asn45 are disordered. A coiled-coil region spans residues Val159–Glu746. Positions Ser892–Ala904 are enriched in low complexity. Disordered regions lie at residues Ser892–Asp969, Glu981–Pro1057, Val1087–Thr1117, and Ile1152–Thr1217. Residues Ser947–Thr960 show a composition bias toward basic residues. Polar residues-rich tracts occupy residues Ser986–Thr1007 and Val1087–Ser1103. Positions Glu1173–Gly1186 are enriched in low complexity. A compositionally biased stretch (acidic residues) spans Gly1189–Glu1200.

This sequence belongs to the CRWN family.

Its subcellular location is the nucleus matrix. It is found in the nucleus lamina. Functionally, architectural component of nuclear structure that plays different roles in controlling nuclear size and morphology. Involved in the organization of multimeric complexes in the peripheral nucleoskeleton. This is Nuclear matrix constituent protein 1 from Allium cepa (Onion).